Reading from the N-terminus, the 276-residue chain is Protein canopy homolog 3 (276 aa).

A signal peptide spans 1–26; the sequence is MESMSELAPRCLLFPLLLLLPLLLLP. The Saposin B-type domain maps to 47–269; sequence SKCEVCKYVA…EGVQKASPLP (223 aa). 3 cysteine pairs are disulfide-bonded: C49–C206, C52–C194, and C104–C166. N153 is a glycosylation site (N-linked (GlcNAc...) asparagine). Residues 153–179 adopt a coiled-coil conformation; sequence NETSAEVADLKKQCDVLVEEFEEVIED. The tract at residues 218–276 is disordered; sequence IASLGGKKSKKKRSGVKGSSSGSSKQRKELGGLGEDANAEEEEGVQKASPLPHSPPDEL.

This sequence belongs to the canopy family. Interacts with HSP90B1; this interaction is disrupted in the presence of ATP. Interacts with TLR1, TLR2, TLR4 and TLR9. Strongest interaction with TLR4.

It is found in the endoplasmic reticulum. Its function is as follows. Toll-like receptor (TLR)-specific co-chaperone for HSP90B1. Required for proper TLR folding, except that of TLR3, and hence controls TLR exit from the endoplasmic reticulum. Consequently, required for both innate and adaptive immune responses. The protein is Protein canopy homolog 3 (Cnpy3) of Mus musculus (Mouse).